A 186-amino-acid chain; its full sequence is MDRLPLELPSSLRQEFKSPFGPVYTDVTQFLTDAGRPIIAVGDIVTYHLQTVDYTPAVAVIDGQTKRESVDETVKAALSKHNKRIDVENQPGTISIALLEALQTAVETPESVMIVVDGEEDLATLPAVLVARPGGTVVYGQPDQGMVRIAVTPETKITMSRLLKRMDGDAAAAFDRLGVDRSGDKK.

The GTP site is built by Asp-43, Ile-44, Val-45, Asp-62, Glu-120, and Asp-143.

This sequence belongs to the GTP-dependent DPCK family.

The catalysed reaction is 3'-dephospho-CoA + GTP = GDP + CoA + H(+). The protein operates within cofactor biosynthesis; coenzyme A biosynthesis. In terms of biological role, catalyzes the GTP-dependent phosphorylation of the 3'-hydroxyl group of dephosphocoenzyme A to form coenzyme A (CoA). This is GTP-dependent dephospho-CoA kinase from Haloquadratum walsbyi (strain DSM 16790 / HBSQ001).